We begin with the raw amino-acid sequence, 359 residues long: Type II methyltransferase M.HinfI (359 aa).

One can recognise an RAMA domain in the interval 275–358 (KVPMKTLIEA…LDSLRYEYTN (84 aa)).

The protein belongs to the N(4)/N(6)-methyltransferase family.

The catalysed reaction is a 2'-deoxyadenosine in DNA + S-adenosyl-L-methionine = an N(6)-methyl-2'-deoxyadenosine in DNA + S-adenosyl-L-homocysteine + H(+). In terms of biological role, a beta subtype methylase that recognizes the double-stranded sequence 5'-GANTC-3', methylates A-2 on both strands, and protects the DNA from cleavage by the HinfI endonuclease. The protein is Type II methyltransferase M.HinfI (hinfIM) of Haemophilus influenzae.